Reading from the N-terminus, the 198-residue chain is Molybdenum cofactor guanylyltransferase (198 aa).

GTP-binding positions include 14 to 16 (LAG), Lys27, Asp73, and Asp103. Asp103 contacts Mg(2+).

The protein belongs to the MobA family. Monomer. The cofactor is Mg(2+).

The protein resides in the cytoplasm. It catalyses the reaction Mo-molybdopterin + GTP + H(+) = Mo-molybdopterin guanine dinucleotide + diphosphate. Functionally, transfers a GMP moiety from GTP to Mo-molybdopterin (Mo-MPT) cofactor (Moco or molybdenum cofactor) to form Mo-molybdopterin guanine dinucleotide (Mo-MGD) cofactor. The chain is Molybdenum cofactor guanylyltransferase from Pseudomonas paraeruginosa (strain DSM 24068 / PA7) (Pseudomonas aeruginosa (strain PA7)).